The chain runs to 103 residues: Histone H4 (103 aa).

A compositionally biased stretch (gly residues) spans 1-14 (MSGRGKGGKGLGKG). The segment at 1–20 (MSGRGKGGKGLGKGGAKRHR) is disordered. Serine 2 bears the N-acetylserine mark. Lysine 17 is subject to N6-acetyllysine. Residues 17–21 (KRHRK) mediate DNA binding. The residue at position 21 (lysine 21) is an N6-methyllysine.

The protein belongs to the histone H4 family. In terms of assembly, the nucleosome is a histone octamer containing two molecules each of H2A, H2B, H3 and H4 assembled in one H3-H4 heterotetramer and two H2A-H2B heterodimers. The octamer wraps approximately 147 bp of DNA.

Its subcellular location is the nucleus. The protein localises to the chromosome. Its function is as follows. Core component of nucleosome. Nucleosomes wrap and compact DNA into chromatin, limiting DNA accessibility to the cellular machineries which require DNA as a template. Histones thereby play a central role in transcription regulation, DNA repair, DNA replication and chromosomal stability. DNA accessibility is regulated via a complex set of post-translational modifications of histones, also called histone code, and nucleosome remodeling. The chain is Histone H4 from Capsicum annuum (Capsicum pepper).